The primary structure comprises 156 residues: ATP synthase subunit b (156 aa).

A helical transmembrane segment spans residues 7-27 (FFAQMVVFFILWWVVAKFIWP).

It belongs to the ATPase B chain family. In terms of assembly, F-type ATPases have 2 components, F(1) - the catalytic core - and F(0) - the membrane proton channel. F(1) has five subunits: alpha(3), beta(3), gamma(1), delta(1), epsilon(1). F(0) has three main subunits: a(1), b(2) and c(10-14). The alpha and beta chains form an alternating ring which encloses part of the gamma chain. F(1) is attached to F(0) by a central stalk formed by the gamma and epsilon chains, while a peripheral stalk is formed by the delta and b chains.

The protein resides in the cell inner membrane. F(1)F(0) ATP synthase produces ATP from ADP in the presence of a proton or sodium gradient. F-type ATPases consist of two structural domains, F(1) containing the extramembraneous catalytic core and F(0) containing the membrane proton channel, linked together by a central stalk and a peripheral stalk. During catalysis, ATP synthesis in the catalytic domain of F(1) is coupled via a rotary mechanism of the central stalk subunits to proton translocation. In terms of biological role, component of the F(0) channel, it forms part of the peripheral stalk, linking F(1) to F(0). The protein is ATP synthase subunit b of Cupriavidus taiwanensis (strain DSM 17343 / BCRC 17206 / CCUG 44338 / CIP 107171 / LMG 19424 / R1) (Ralstonia taiwanensis (strain LMG 19424)).